We begin with the raw amino-acid sequence, 197 residues long: Recombination protein RecR (197 aa).

The segment at 55–70 adopts a C4-type zinc-finger fold; sequence CVQCRDFTESEICTIC. A Toprim domain is found at 78–173; the sequence is QQLCVVESPA…RPSRLAQGMP (96 aa).

The protein belongs to the RecR family.

Functionally, may play a role in DNA repair. It seems to be involved in an RecBC-independent recombinational process of DNA repair. It may act with RecF and RecO. The polypeptide is Recombination protein RecR (Xanthomonas oryzae pv. oryzae (strain MAFF 311018)).